A 273-amino-acid chain; its full sequence is MSTIRPVFYVSDGTGITAETIGHSLLTQFSGFNFVTDRMSFIDDADKARDAALRVRAAGERYQVRPVVVNSCVDPQLSMILAESGALMLDVFAPFIEPLERELNAPRHSRVGRAHGMVDFETYHRRINAMNFALSHDDGIALNYDEADVILVAVSRAGKTPTCIYLALHYGIRAANYPLTEEDLESERLPPRLRNYRSKLFGLTIDPERLQQIRQERRANSRYSAAETCRREVATAERMFQMERIPTLSTTNTSIEEISSKVLSTLGLQREMF.

153–160 provides a ligand contact to ADP; it reads AVSRAGKT.

This sequence belongs to the pyruvate, phosphate/water dikinase regulatory protein family. PSRP subfamily.

The enzyme catalyses [pyruvate, water dikinase] + ADP = [pyruvate, water dikinase]-phosphate + AMP + H(+). The catalysed reaction is [pyruvate, water dikinase]-phosphate + phosphate + H(+) = [pyruvate, water dikinase] + diphosphate. Its function is as follows. Bifunctional serine/threonine kinase and phosphorylase involved in the regulation of the phosphoenolpyruvate synthase (PEPS) by catalyzing its phosphorylation/dephosphorylation. This chain is Putative phosphoenolpyruvate synthase regulatory protein, found in Xanthomonas campestris pv. campestris (strain 8004).